Here is a 239-residue protein sequence, read N- to C-terminus: Small ribosomal subunit protein uS2c (239 aa).

The protein belongs to the universal ribosomal protein uS2 family.

Its subcellular location is the plastid. The protein is Small ribosomal subunit protein uS2c (rps2) of Aneura mirabilis (Parasitic liverwort).